A 976-amino-acid chain; its full sequence is Ephrin type-B receptor 4b (976 aa).

The signal sequence occupies residues 1-23 (MDRVCWIMALSWFWMVSTGLVSA). Residues 24–541 (EEEVLMNTKL…ESPSRLMLTG (518 aa)) are Extracellular-facing. The region spanning 25 to 204 (EEVLMNTKLE…FFKKCPAVSR (180 aa)) is the Eph LBD domain. Cystine bridges form between Cys-69–Cys-186 and Cys-103–Cys-113. Fibronectin type-III domains are found at residues 326–434 (PPSA…TSRD) and 438–529 (PVSG…TLPD). The helical transmembrane segment at 542–562 (VLVAIGLLILIAVVIVAVFCF) threads the bilayer. The Cytoplasmic portion of the chain corresponds to 563-976 (RRSTRRRDPD…LRIHGGSLRY (414 aa)). The Protein kinase domain maps to 613 to 897 (VKIEEVIGAG…IPDGPSHPLL (285 aa)). ATP-binding positions include 619–627 (IGAGEFGEV) and Lys-645. Residue Asp-738 is the Proton acceptor of the active site. Residues 906 to 970 (SHCSSVADWL…LSSVQTLRIH (65 aa)) enclose the SAM domain.

It belongs to the protein kinase superfamily. Tyr protein kinase family. Ephrin receptor subfamily.

It is found in the cell membrane. It catalyses the reaction L-tyrosyl-[protein] + ATP = O-phospho-L-tyrosyl-[protein] + ADP + H(+). Receptor tyrosine kinase which binds promiscuously transmembrane ephrin-B family ligands residing on adjacent cells, leading to contact-dependent bidirectional signaling into neighboring cells. The signaling pathway downstream of the receptor is referred to as forward signaling while the signaling pathway downstream of the ephrin ligand is referred to as reverse signaling. Together with its cognate ligand/functional ligand EFNB2 is involved in the regulation of cell adhesion and cell migration, and plays a central role in heart morphogenesis, angiogenesis and blood vessel remodeling and permeability. EPHB4-mediated forward signaling controls cellular repulsion and segregation from EFNB2-expressing cells. Involved in somitogenesis. The sequence is that of Ephrin type-B receptor 4b from Danio rerio (Zebrafish).